The chain runs to 974 residues: MNSMADTDRVNLTPIQRASEKSVQYHLKQVIGRGSYGVVYKAINKHTDQVVAIKEVVYENDEELNDIMAEISLLKNLNHNNIVKYHGFIRKSYELYILLEYCANGSLRRLISRSSTGLSENESKTYVTQTLLGLKYLHGEGVIHRDIKAANILLSADNTVKLADFGVSTIVNSSALTLAGTLNWMAPEILGNRGASTLSDIWSLGATVVEMLTKNPPYHNLTDANIYYAVENDTYYPPSSFSEPLKDFLSKCFVKNMYKRPTADQLLKHVWINSTENVKVDKLNKFKEDFTDADYHWDADFQEEKLNISPSKFSLAAAPAAWAENNQELDLMPPTESQLLSQLKSSSKPLTDLHVLFSVCSLENIADTIIECLSRTTVDKRLITAFGSIFVYDTQHNHSRLRLKFIAMGGIPLIIKFEHLAKEFVIDYPQTLIECGIMYPPNFASLKTPKYILELVYRFYDLTSTAFWCRWCFKHLDISLLLNNIHERRAQSILLKLSSYAPWSFEKILPSLIDSKLKKKILISPQITYVVFKSINYMITTNDDKIHKSAIPSSSSLPLSSSPTRNSPVNSVQSPSRSPVHSLMATRPSSPMRHKSISNFPHLTISSKSRLLIELPEGFFTWLTSFFVDMAQIKDLSVLKYFTKLCYLTVHINSTFLNDLLDNDAFFAFIRNIDTIIPFIDDAKTAAFIWKQITAICVEMSLDMDQMSASLFSTAMNFIRKKNNTSISGLEIILNCLHFTLRNVNDDVAPTVGSSESHSVFLIKVNNDAAIELPIDQLVDLFYALNDDDVNLSKLISIFTKICSLPGFENLTINIIFHPNFYEKIVSFFDTYFNSLLIQIDLLKFIKLIFSKSLLKLYDYTGQPDPIKQTEPNRRNKATVFKLRAILVQITEFLNNNWNKDVPKRNSNQVGGDSVLICQLCEDIRSLSKKGSLQKVSSVTAAIGSSPTKDERSNLRSSKDKSDGFSVPITTFQT.

The Protein kinase domain occupies 25-272; that stretch reads YHLKQVIGRG…ADQLLKHVWI (248 aa). Residues 31 to 39 and Lys54 each bind ATP; that span reads IGRGSYGVV. Catalysis depends on Asp146, which acts as the Proton acceptor. The self association domain stretch occupies residues 360–702; the sequence is CSLENIADTI…ITAICVEMSL (343 aa). Positions 554-563 are enriched in low complexity; it reads SSSLPLSSSP. Positions 554 to 592 are disordered; that stretch reads SSSLPLSSSPTRNSPVNSVQSPSRSPVHSLMATRPSSPM. Ser561 and Ser567 each carry phosphoserine. Positions 564-579 are enriched in polar residues; that stretch reads TRNSPVNSVQSPSRSP. The tract at residues 751-974 is auto-inhibitory domain; sequence TVGSSESHSV…FSVPITTFQT (224 aa). Phosphothreonine is present on Thr870. Residues 941-974 form a disordered region; that stretch reads AAIGSSPTKDERSNLRSSKDKSDGFSVPITTFQT. The span at 948 to 963 shows a compositional bias: basic and acidic residues; the sequence is TKDERSNLRSSKDKSD.

The protein belongs to the protein kinase superfamily. Ser/Thr protein kinase family. As to quaternary structure, homodimer. Interacts with TEM1. Post-translationally, phosphorylation by CDK1 reduces the binding to the mother spindle pole body. The extent of phosphorylation gradually increases during cell-cycle progression until some point during late anaphase/telophase when it is rapidly dephosphorylated by CDC14. Phosphorylation inhibits kinase activity and dephosphorylation by CDC14 activates CDC15.

The protein localises to the cytoplasm. The protein resides in the cytoskeleton. Its subcellular location is the spindle pole. It localises to the bud neck. It catalyses the reaction L-seryl-[protein] + ATP = O-phospho-L-seryl-[protein] + ADP + H(+). The enzyme catalyses L-threonyl-[protein] + ATP = O-phospho-L-threonyl-[protein] + ADP + H(+). Its activity is regulated as follows. Kinase activity is inhibited by phosphorylation and activated by dephosphorylation by CDC14. Functionally, protein kinase of the mitotic exit network (MEN) essential for late nuclear division in the mitotic cycle. Promotes mitotic exit by phosphorylating DBF2 and directly switching on DBF2 kinase activity. Involved in the localization of DBF2 and DBF20 to the neck which is necessary to undergo cytokinesis. Plays a role in segregation of chromosomes during recovery from spindle checkpoint activation. Required for spindle pole localization of CDK1 and inactivation of CDC2 kinase activity at the end of mitosis. Required for spindle disassembly after meiosis II and plays a role in spore morphogenesis. The sequence is that of Cell division control protein 15 (CDC15) from Saccharomyces cerevisiae (strain ATCC 204508 / S288c) (Baker's yeast).